Consider the following 176-residue polypeptide: Nuclear transcription factor Y subunit B-10 (176 aa).

Residues 1–15 are compositionally biased toward gly residues; that stretch reads MAESQTGGGGGGSHE. Residues 1–29 form a disordered region; it reads MAESQTGGGGGGSHESGGDQSPRSLNVRE. A2 carries the N-acetylalanine modification. The DNA-binding element occupies 34-40; it reads LPIANIS. A subunit association domain (SAD) region spans residues 61-72; sequence MQECVSEFISFV. The segment at 121-176 is disordered; it reads GDTKGSGKGGESSAKRDGQPSQVSQFSQVPQQGSFSQGPYGNSQGSNMMVQMPGTE. A compositionally biased stretch (low complexity) spans 139–159; sequence QPSQVSQFSQVPQQGSFSQGP. A compositionally biased stretch (polar residues) spans 160-169; that stretch reads YGNSQGSNMM.

Belongs to the NFYB/HAP3 subunit family. In terms of assembly, heterotrimeric transcription factor composed of three components, NF-YA, NF-YB and NF-YC. NF-YB and NF-YC must interact and dimerize for NF-YA association and DNA binding. In terms of tissue distribution, expressed in the whole plant, except roots.

It localises to the nucleus. Its function is as follows. Component of the NF-Y/HAP transcription factor complex. The NF-Y complex stimulates the transcription of various genes by recognizing and binding to a CCAAT motif in promoters. This Arabidopsis thaliana (Mouse-ear cress) protein is Nuclear transcription factor Y subunit B-10 (NFYB10).